The chain runs to 426 residues: ATP-dependent Clp protease ATP-binding subunit ClpX (426 aa).

The ClpX-type ZB domain occupies 1–52 (MNEIKKRCSFCNKEESLDNPIINSGITPDVYICNYCLIVGSEILTGYLNKNP). The Zn(2+) site is built by Cys8, Cys11, Cys33, and Cys36. 129-136 (PTGSGKTL) is a binding site for ATP.

The protein belongs to the ClpX chaperone family. Component of the ClpX-ClpP complex. Forms a hexameric ring that, in the presence of ATP, binds to fourteen ClpP subunits assembled into a disk-like structure with a central cavity, resembling the structure of eukaryotic proteasomes.

Functionally, ATP-dependent specificity component of the Clp protease. It directs the protease to specific substrates. Can perform chaperone functions in the absence of ClpP. In Helicobacter hepaticus (strain ATCC 51449 / 3B1), this protein is ATP-dependent Clp protease ATP-binding subunit ClpX.